Reading from the N-terminus, the 222-residue chain is 7-cyano-7-deazaguanine synthase (222 aa).

8–18 (LSGGLDSATCL) lines the ATP pocket. The Zn(2+) site is built by Cys-187, Cys-197, Cys-200, and Cys-203.

The protein belongs to the QueC family. Zn(2+) serves as cofactor.

The enzyme catalyses 7-carboxy-7-deazaguanine + NH4(+) + ATP = 7-cyano-7-deazaguanine + ADP + phosphate + H2O + H(+). It participates in purine metabolism; 7-cyano-7-deazaguanine biosynthesis. In terms of biological role, catalyzes the ATP-dependent conversion of 7-carboxy-7-deazaguanine (CDG) to 7-cyano-7-deazaguanine (preQ(0)). This Alcanivorax borkumensis (strain ATCC 700651 / DSM 11573 / NCIMB 13689 / SK2) protein is 7-cyano-7-deazaguanine synthase.